A 426-amino-acid polypeptide reads, in one-letter code: Glutamyl-tRNA reductase (426 aa).

Residues 50–53, Ser108, 113–115, and Gln119 contribute to the substrate site; these read TCNR and EPQ. Cys51 acts as the Nucleophile in catalysis. Position 188–193 (188–193) interacts with NADP(+); sequence GAGEMI.

It belongs to the glutamyl-tRNA reductase family. As to quaternary structure, homodimer.

The catalysed reaction is (S)-4-amino-5-oxopentanoate + tRNA(Glu) + NADP(+) = L-glutamyl-tRNA(Glu) + NADPH + H(+). The protein operates within porphyrin-containing compound metabolism; protoporphyrin-IX biosynthesis; 5-aminolevulinate from L-glutamyl-tRNA(Glu): step 1/2. Functionally, catalyzes the NADPH-dependent reduction of glutamyl-tRNA(Glu) to glutamate 1-semialdehyde (GSA). This is Glutamyl-tRNA reductase from Polaromonas sp. (strain JS666 / ATCC BAA-500).